Consider the following 540-residue polypeptide: 2,3-bisphosphoglycerate-independent phosphoglycerate mutase (540 aa).

Positions 24 and 74 each coordinate Mn(2+). The active-site Phosphoserine intermediate is S74. Residues H135, 165-166 (RD), R197, R203, 268-271 (RPDR), and K341 contribute to the substrate site. Mn(2+) contacts are provided by D408, H412, D449, H450, and H467.

This sequence belongs to the BPG-independent phosphoglycerate mutase family. In terms of assembly, monomer. Requires Mn(2+) as cofactor.

The catalysed reaction is (2R)-2-phosphoglycerate = (2R)-3-phosphoglycerate. It participates in carbohydrate degradation; glycolysis; pyruvate from D-glyceraldehyde 3-phosphate: step 3/5. Catalyzes the interconversion of 2-phosphoglycerate and 3-phosphoglycerate. This chain is 2,3-bisphosphoglycerate-independent phosphoglycerate mutase, found in Prochlorococcus marinus (strain MIT 9303).